The sequence spans 156 residues: Small ribosomal subunit protein uS7 (156 aa).

It belongs to the universal ribosomal protein uS7 family. Part of the 30S ribosomal subunit. Contacts proteins S9 and S11.

Its function is as follows. One of the primary rRNA binding proteins, it binds directly to 16S rRNA where it nucleates assembly of the head domain of the 30S subunit. Is located at the subunit interface close to the decoding center, probably blocks exit of the E-site tRNA. In Levilactobacillus brevis (strain ATCC 367 / BCRC 12310 / CIP 105137 / JCM 1170 / LMG 11437 / NCIMB 947 / NCTC 947) (Lactobacillus brevis), this protein is Small ribosomal subunit protein uS7.